The primary structure comprises 545 residues: Triacylglycerol lipase ptl1 (545 aa).

The 177-residue stretch at 182–358 (LYFNGGTAFG…EVCTPKNFIW (177 aa)) folds into the PNPLA domain. The GXSXG signature appears at 213–217 (GCASG).

It is found in the lipid droplet. The catalysed reaction is a triacylglycerol + H2O = a diacylglycerol + a fatty acid + H(+). Its function is as follows. Lipid particle-localized triacylglycerol (TAG) lipase. The lipid droplet/particle is a lipid storage compartment which serves as a depot of energy and building blocks for membrane lipid biosynthesis. Involved in the mobilization of the non-polar storage lipids triacylglycerols (TAGs) from lipid particles by hydrolysis of TAGs, releasing and supplying specific fatty acids to the appropriate metabolic pathways. This Schizosaccharomyces pombe (strain 972 / ATCC 24843) (Fission yeast) protein is Triacylglycerol lipase ptl1 (ptl1).